Consider the following 440-residue polypeptide: Beta-1,3-galactosyl-O-glycosyl-glycoprotein beta-1,6-N-acetylglucosaminyltransferase 3 (440 aa).

Residues 1–12 (MKMTGWKKKLCR) are Cytoplasmic-facing. The helical; Signal-anchor for type II membrane protein transmembrane segment at 13–30 (GHHLWALGCYMLLAVVAL) threads the bilayer. Over 31 to 440 (RLSLRLKCDV…RHKAIYGTEL (410 aa)) the chain is Lumenal. 4 disulfide bridges follow: Cys-73–Cys-230, Cys-164–Cys-384, Cys-185–Cys-212, and Cys-393–Cys-425. The N-linked (GlcNAc...) asparagine glycan is linked to Asn-108.

It belongs to the glycosyltransferase 14 family. Post-translationally, N-glycosylated.

The protein resides in the golgi apparatus membrane. The catalysed reaction is a 3-O-[beta-D-galactosyl-(1-&gt;3)-N-acetyl-alpha-D-galactosaminyl]-L-seryl-[protein] + UDP-N-acetyl-alpha-D-glucosamine = 3-O-{beta-D-galactosyl-(1-&gt;3)-[N-acetyl-beta-D-glucosaminyl-(1-&gt;6)]-N-acetyl-alpha-D-galactosaminyl}-L-seryl-[protein] + UDP + H(+). It carries out the reaction a 3-O-[beta-D-galactosyl-(1-&gt;3)-N-acetyl-alpha-D-galactosaminyl]-L-threonyl-[protein] + UDP-N-acetyl-alpha-D-glucosamine = a 3-O-{beta-D-galactosyl-(1-&gt;3)-[N-acetyl-beta-D-glucosaminyl-(1-&gt;6)]-N-acetyl-alpha-D-galactosaminyl}-L-threonyl-[protein] + UDP + H(+). The enzyme catalyses a beta-D-Gal-(1-&gt;4)-beta-D-GlcNAc-(1-&gt;3)-beta-D-Gal-(1-&gt;4)-beta-D-GlcNAc derivative + UDP-N-acetyl-alpha-D-glucosamine = a beta-D-Gal-(1-&gt;4)-beta-D-GlcNAc-(1-&gt;3)-[beta-D-GlcNAc-(1-&gt;6)]-beta-D-Gal-(1-&gt;4)-N-acetyl-beta-D-glucosaminyl derivative + UDP + H(+). It catalyses the reaction 3-O-[N-acetyl-beta-D-glucosaminyl-(1-&gt;3)-N-acetyl-alpha-D-galactosaminyl]-L-seryl-[protein] + UDP-N-acetyl-alpha-D-glucosamine = 3-O-[N-acetyl-beta-D-glucosaminyl-(1-&gt;3)-[N-acetyl-beta-D-glucosaminyl-(1-&gt;6)]-N-acetyl-alpha-D-galactosaminyl]-L-seryl-[protein] + UDP + H(+). The catalysed reaction is a 3-O-[N-acetyl-beta-D-glucosaminyl-(1-&gt;3)-N-acetyl-alpha-D-galactosaminyl]-L-threonyl-[protein] + UDP-N-acetyl-alpha-D-glucosamine = 3-O-[N-acetyl-beta-D-glucosaminyl-(1-&gt;3)-[N-acetyl-beta-D-glucosaminyl-(1-&gt;6)]-N-acetyl-alpha-D-galactosaminyl]-L-threonyl-[protein] + UDP + H(+). It functions in the pathway protein modification; protein glycosylation. Functionally, glycosyltransferase that can synthesize all known mucin beta 6 N-acetylglucosaminides. Mediates core 2 and core 4 O-glycan branching, 2 important steps in mucin-type biosynthesis. Also has I-branching enzyme activity by converting linear into branched poly-N-acetyllactosaminoglycans, leading to introduce the blood group I antigen during embryonic development. The chain is Beta-1,3-galactosyl-O-glycosyl-glycoprotein beta-1,6-N-acetylglucosaminyltransferase 3 (GCNT3) from Ovis aries (Sheep).